A 216-amino-acid polypeptide reads, in one-letter code: ATP-dependent Clp protease proteolytic subunit (216 aa).

Ser120 functions as the Nucleophile in the catalytic mechanism. His145 is an active-site residue.

It belongs to the peptidase S14 family. Fourteen ClpP subunits assemble into 2 heptameric rings which stack back to back to give a disk-like structure with a central cavity, resembling the structure of eukaryotic proteasomes.

Its subcellular location is the cytoplasm. The catalysed reaction is Hydrolysis of proteins to small peptides in the presence of ATP and magnesium. alpha-casein is the usual test substrate. In the absence of ATP, only oligopeptides shorter than five residues are hydrolyzed (such as succinyl-Leu-Tyr-|-NHMec, and Leu-Tyr-Leu-|-Tyr-Trp, in which cleavage of the -Tyr-|-Leu- and -Tyr-|-Trp bonds also occurs).. In terms of biological role, cleaves peptides in various proteins in a process that requires ATP hydrolysis. Has a chymotrypsin-like activity. Plays a major role in the degradation of misfolded proteins. In Cupriavidus pinatubonensis (strain JMP 134 / LMG 1197) (Cupriavidus necator (strain JMP 134)), this protein is ATP-dependent Clp protease proteolytic subunit.